The chain runs to 159 residues: Large ribosomal subunit protein uL11 (159 aa).

The interval 1–26 (MAGTIEVLVPGGKANPGPPLGPELGP) is disordered.

It belongs to the universal ribosomal protein uL11 family. In terms of assembly, part of the ribosomal stalk of the 50S ribosomal subunit. Interacts with L10 and the large rRNA to form the base of the stalk. L10 forms an elongated spine to which L12 dimers bind in a sequential fashion forming a multimeric L10(L12)X complex.

In terms of biological role, forms part of the ribosomal stalk which helps the ribosome interact with GTP-bound translation factors. This Haloferax volcanii (strain ATCC 29605 / DSM 3757 / JCM 8879 / NBRC 14742 / NCIMB 2012 / VKM B-1768 / DS2) (Halobacterium volcanii) protein is Large ribosomal subunit protein uL11.